Here is a 228-residue protein sequence, read N- to C-terminus: L-ornithine N5-acetyltransferase NATA1 (228 aa).

Positions 1-21 are disordered; that stretch reads MAPPTAAPEPNTVPETSPTGH. One can recognise an N-acetyltransferase domain in the interval 77–227; it reads VFLLEISPSP…DALQAIDKLN (151 aa). Residues 153–155, 161–166, 192–195, and tyrosine 199 each bind acetyl-CoA; these read IFM, RKGFGK, and NVNA.

Belongs to the acetyltransferase family.

Functionally, acetyltransferase that converts ornithine to N5-acetylornithine, which is likely used in plant defense. This Arabidopsis thaliana (Mouse-ear cress) protein is L-ornithine N5-acetyltransferase NATA1 (NATA1).